An 893-amino-acid polypeptide reads, in one-letter code: 104 kDa microneme/rhoptry antigen (893 aa).

A signal peptide spans 1 to 19; sequence MKFLVLLFNILCLFPILGA. Disordered regions lie at residues 492 to 666, 681 to 799, and 818 to 873; these read SKKK…FDPK, KTKE…PTGK, and KEHM…RKPD. Composition is skewed to basic and acidic residues over residues 525–565 and 573–591; these read SESK…EHKP and KRPEFPKKSKSPKRPESPK. The segment covering 595 to 606 has biased composition (low complexity); the sequence is RPVSPQRPVSPK. Composition is skewed to basic and acidic residues over residues 731–755, 788–797, and 818–830; these read EEVKTEDIHSETGEPEEPKRPDSPT, EAGRILRDPT, and KEHMGAEIRKIVV. Acidic residues predominate over residues 831 to 841; the sequence is DDDGTEADDED. Positions 851–869 are enriched in basic residues; the sequence is STVRRRRPRPKKSSKSSKP. Asp-873 is lipidated: GPI-anchor amidated aspartate. Residues 874 to 893 constitute a propeptide, removed in mature form; it reads SAFVPSIIFIFLVSLIVGIL.

The protein localises to the cell membrane. This chain is 104 kDa microneme/rhoptry antigen, found in Theileria annulata.